Reading from the N-terminus, the 154-residue chain is Deoxyuridine 5'-triphosphate nucleotidohydrolase (154 aa).

Substrate contacts are provided by residues R72–G74, N85, L89–D91, and M99.

Belongs to the dUTPase family. It depends on Mg(2+) as a cofactor.

The enzyme catalyses dUTP + H2O = dUMP + diphosphate + H(+). It participates in pyrimidine metabolism; dUMP biosynthesis; dUMP from dCTP (dUTP route): step 2/2. In terms of biological role, this enzyme is involved in nucleotide metabolism: it produces dUMP, the immediate precursor of thymidine nucleotides and it decreases the intracellular concentration of dUTP so that uracil cannot be incorporated into DNA. The polypeptide is Deoxyuridine 5'-triphosphate nucleotidohydrolase (Psychrobacter sp. (strain PRwf-1)).